Reading from the N-terminus, the 338-residue chain is Eukaryotic translation initiation factor 3 subunit H (338 aa).

The MPN domain occupies 22 to 154; it reads VQCDGLAVMK…LKAYRLTPQA (133 aa).

Belongs to the eIF-3 subunit H family. In terms of assembly, component of the eukaryotic translation initiation factor 3 (eIF-3) complex. The eIF-3 complex interacts with pix. Interacts with mxt.

The protein resides in the cytoplasm. Functionally, component of the eukaryotic translation initiation factor 3 (eIF-3) complex, which is involved in protein synthesis of a specialized repertoire of mRNAs and, together with other initiation factors, stimulates binding of mRNA and methionyl-tRNAi to the 40S ribosome. The eIF-3 complex specifically targets and initiates translation of a subset of mRNAs involved in cell proliferation. The polypeptide is Eukaryotic translation initiation factor 3 subunit H (Drosophila erecta (Fruit fly)).